A 451-amino-acid polypeptide reads, in one-letter code: Tubulin alpha-2 chain (451 aa).

Q11 serves as a coordination point for GTP. Residue K40 is modified to N6-acetyllysine. Residues E71, G144, T145, T179, N206, and N228 each contribute to the GTP site. E71 provides a ligand contact to Mg(2+). E254 is an active-site residue.

This sequence belongs to the tubulin family. Dimer of alpha and beta chains. A typical microtubule is a hollow water-filled tube with an outer diameter of 25 nm and an inner diameter of 15 nM. Alpha-beta heterodimers associate head-to-tail to form protofilaments running lengthwise along the microtubule wall with the beta-tubulin subunit facing the microtubule plus end conferring a structural polarity. Microtubules usually have 13 protofilaments but different protofilament numbers can be found in some organisms and specialized cells. It depends on Mg(2+) as a cofactor. Post-translationally, undergoes a tyrosination/detyrosination cycle, the cyclic removal and re-addition of a C-terminal tyrosine residue by the enzymes tubulin tyrosine carboxypeptidase (TTCP) and tubulin tyrosine ligase (TTL), respectively.

The protein localises to the cytoplasm. Its subcellular location is the cytoskeleton. The enzyme catalyses GTP + H2O = GDP + phosphate + H(+). Its function is as follows. Tubulin is the major constituent of microtubules, a cylinder consisting of laterally associated linear protofilaments composed of alpha- and beta-tubulin heterodimers. Microtubules grow by the addition of GTP-tubulin dimers to the microtubule end, where a stabilizing cap forms. Below the cap, tubulin dimers are in GDP-bound state, owing to GTPase activity of alpha-tubulin. The protein is Tubulin alpha-2 chain (TUBA2) of Chlamydomonas reinhardtii (Chlamydomonas smithii).